A 348-amino-acid polypeptide reads, in one-letter code: Putative zinc metalloprotease HP_0258 (348 aa).

Residue H16 coordinates Zn(2+). E17 is a catalytic residue. H20 lines the Zn(2+) pocket. 5 consecutive transmembrane segments (helical) span residues 43 to 63 (CFFKLFGTQFALSLIPLGGYV), 93 to 113 (WILFGGAFFNFLFAILVYFFL), 247 to 267 (LIMGSSSVKELSGVVGIVGAL), 275 to 295 (MLLLFGAFLSINLGILNLLPI), and 324 to 344 (LWLAGVGFLVFIMFLGLFNDL). The PDZ domain occupies 106-175 (AILVYFFLAL…GELVLEIERN (70 aa)).

It belongs to the peptidase M50B family. It depends on Zn(2+) as a cofactor.

The protein resides in the cell inner membrane. The protein is Putative zinc metalloprotease HP_0258 of Helicobacter pylori (strain ATCC 700392 / 26695) (Campylobacter pylori).